Here is a 1429-residue protein sequence, read N- to C-terminus: MEGENSKSVHPILSHSTSVVSERASSSGVNGTNGGMKQVSPVSTARTSIARRPPSTVGSQTGSLVNAPPKRSSGIERFDHVTGTAENRPQTPSTKASVANVKPAGAAESAQNANLISSKSENVPEPAGEKVSMPEKQDLQSALPSDAVSNAVIGWKSIYHASDVDVHDHFANVLSALQWDSHRVEPSILETYSSYKLTGQWWQSTSILLAVSILSWIASKLWFRFFILFFIIITGTIVYGSCMISVRRNIREEVVQELSKKNGDVDYETMSWFNTLLQRFWMLNEPEISKSVSTSVEQSIAEYLPSFIKEAAFSTFTLGSKAPRIDRVRTHPPVERDVVLMDVDFSLTPNDNYDVNDSSLKCRVNSLISLVIKFGFGKYMFSFPITIKDLRLSGKLRIRWGLSSDYPFIQTASFSFLETPIVYANIRPIDIPFLDADIFYIPGIGQFVSEQLGLLLNSMVLWPNMFDYDLSAMMAGIASGTAVGVVGLKIYSARRGEVSDSSIDRKPSSFITVTTSGREHGRTPIRSNTFSPTFDTTIYVVINSLNDPLKLSLYDNSGKSPILVGTTYIDPRSLYERGFIGDIYQFLYNAVNVGSVAFDATFFPSLLPKKTMDGSKIEPPESSKGILNVNLGCVNNLTELTELTKKSSLKYVLYVDSKEVASKTIKFVDRTPISLQTNAYIENNKKSSIKVAVFDVKSPEKAIATVSVPLPELLHEGYDTFHFVENPKATIDIESFWTPVDVVEEKSAKTYIDNLVGVMRLSVIKANDLVNVELPTRKSDPYARVIVGNSVVARTVYTPNNLNPIWNEILYVPIMADTKTIDLEAMDYEESGNDRSLGYASINVQKYIRNAKRLDRSALASTVFGTSEVNALTLTSRKGQSVRGTISVNCDYRPCLRLNTDNSSKQSSENVQSATDPTTPAKDNSTSNAETSSITSVISVNEALQYPSGFALISIVSADLQDVGVDLRVFTDNAAFPFITTPIAKTKTPRWSSFGISMVRELQFSETTFQLTDGAKKDPKVVCEHSVKTLDLVSEALGRPYSVEIPGSNGQLNHVRLSITYMPVPMTLNPMESYINSGSLHFMLQDGQNLPIGDIRSSDPFVVLKLNGESAFKSKVIKKNLNPVWNEEADIVVQNRVLDVLELVCYDWDMGEKPDVLGTSNIDLLSLEPNVESQQSIKLDSKTGTINASLRFVPGWHRRKAVLDVTLADNFLHAANKGAKLVVGGVGAAGGLALAGVTTIGSVGSKAVTGVADGVTGTGKHIISGAKGISKMGMFRRSLEKNPSRSDLTTTQEASSSASVPPAIAPESANAALTSTIDKTTGAPELAQKKYKVYVGQGKNMPHKTIKIIVTDNQDHSFKTKSRKGPSPSWNEEIPVKWSLGDELRISAVTSNLLGHTKLGEAVFQEDAIGTFRVVIGGSSSVEIKVEAE.

2 disordered regions span residues 1 to 76 and 103 to 130; these read MEGE…SGIE and PAGAAESAQNANLISSKSENVPEPAGEK. Positions 14-29 are enriched in low complexity; sequence SHSTSVVSERASSSGV. Residues 109-121 show a composition bias toward polar residues; the sequence is SAQNANLISSKSE. A run of 2 helical transmembrane segments spans residues 197–217 and 225–245; these read LTGQWWQSTSILLAVSILSWI and FFILFFIIITGTIVYGSCMIS. The SMP-LTD domain occupies 266 to 471; that stretch reads DYETMSWFNT…WPNMFDYDLS (206 aa). C2 domains are found at residues 462 to 584 and 738 to 858; these read WPNM…GDIY and TPVD…DRSA. A disordered region spans residues 899-932; sequence NTDNSSKQSSENVQSATDPTTPAKDNSTSNAETS. The C2 3 domain maps to 1060–1177; sequence TYMPVPMTLN…EPNVESQQSI (118 aa). Residues 1280-1303 are disordered; that stretch reads EKNPSRSDLTTTQEASSSASVPPA. A compositionally biased stretch (low complexity) spans 1294 to 1303; sequence ASSSASVPPA.

It is found in the membrane. This is an uncharacterized protein from Schizosaccharomyces pombe (strain 972 / ATCC 24843) (Fission yeast).